The following is a 107-amino-acid chain: Cell cycle protein GpsB (107 aa).

Residues 32 to 65 (LDNVIQDYETYISEIEELKAEIERLKNQNTHPKS) adopt a coiled-coil conformation. The segment at 57–80 (KNQNTHPKSPSTENRHAMVQPTRV) is disordered. A compositionally biased stretch (polar residues) spans 58–68 (NQNTHPKSPST).

The protein belongs to the GpsB family. In terms of assembly, forms polymers through the coiled coil domains. Interacts with PBP1, MreC and EzrA.

It localises to the cytoplasm. Its function is as follows. Divisome component that associates with the complex late in its assembly, after the Z-ring is formed, and is dependent on DivIC and PBP2B for its recruitment to the divisome. Together with EzrA, is a key component of the system that regulates PBP1 localization during cell cycle progression. Its main role could be the removal of PBP1 from the cell pole after pole maturation is completed. Also contributes to the recruitment of PBP1 to the division complex. Not essential for septum formation. In Streptococcus uberis (strain ATCC BAA-854 / 0140J), this protein is Cell cycle protein GpsB.